Here is a 311-residue protein sequence, read N- to C-terminus: Ribosomal RNA small subunit methyltransferase H (311 aa).

Residues 34–36, Asp54, Phe78, Asp100, and Gln107 contribute to the S-adenosyl-L-methionine site; that span reads GGH.

The protein belongs to the methyltransferase superfamily. RsmH family.

The protein resides in the cytoplasm. It catalyses the reaction cytidine(1402) in 16S rRNA + S-adenosyl-L-methionine = N(4)-methylcytidine(1402) in 16S rRNA + S-adenosyl-L-homocysteine + H(+). Specifically methylates the N4 position of cytidine in position 1402 (C1402) of 16S rRNA. The sequence is that of Ribosomal RNA small subunit methyltransferase H from Hamiltonella defensa subsp. Acyrthosiphon pisum (strain 5AT).